The chain runs to 524 residues: MVTITGCALCDALVILATLIVAAYLYYAVRFTYWKRKGVVNPKPLPVFGNFLPSVLQKRSPGQILWDIYKAAEAPFVGFYIFARPAILIKDPNIIKHVLVKDFNAFSDRHASAAESDTLGSQNLFTLNGAPWKYLRVKLSPTFTSGRMKKMYPLVESCAKQLQDYLKENCNTKAIEVKETTAKYATDVISTCAFGIESNSLKDPNAEFREFGRKIFEFTRYRTFEVMALFFSPGLVKFLNGNFFTKETTEFLRKVFWDTINFRESNKISRDDFMDLLIQLKNKGTIDNEDGEVTEKVDKIDKDSHLFEFTGDNLVSQPALFFTAGFETNATTLSFTLYELSLQPDLQNRLRSEIAGVMKTSNGKPTYEDVFGMPYLHMVVSETLRKYPPLPLLDRVCLQDYKVPGTDLIIERDTPVFIALLGLHRDPQYYPNPERYDPERFSEENKRQRKAYTYLPFGEGPHNCIGLRFGYMAVKTALVHMLAEFEVKPCKDTPIPLELSTRSSVLATTSGIPLTFVKSTAQVS.

Heme is bound at residue C464.

The protein belongs to the cytochrome P450 family. The cofactor is heme.

The protein localises to the endoplasmic reticulum membrane. The protein resides in the microsome membrane. This Blattella germanica (German cockroach) protein is Cytochrome P450 6k1 (CYP6K1).